The sequence spans 386 residues: Putative 8-amino-7-oxononanoate synthase (386 aa).

Arg-26 is a substrate binding site. Position 113-114 (113-114 (GY)) interacts with pyridoxal 5'-phosphate. His-138 contacts substrate. Pyridoxal 5'-phosphate is bound by residues Ser-186, 211–214 (DDAH), and 240–243 (TLSK). Lys-243 carries the N6-(pyridoxal phosphate)lysine modification. Thr-352 contacts substrate.

The protein belongs to the class-II pyridoxal-phosphate-dependent aminotransferase family. BioF subfamily. In terms of assembly, homodimer. It depends on pyridoxal 5'-phosphate as a cofactor.

The enzyme catalyses 6-carboxyhexanoyl-[ACP] + L-alanine + H(+) = (8S)-8-amino-7-oxononanoate + holo-[ACP] + CO2. Its pathway is cofactor biosynthesis; biotin biosynthesis. In terms of biological role, catalyzes the decarboxylative condensation of pimeloyl-[acyl-carrier protein] and L-alanine to produce 8-amino-7-oxononanoate (AON), [acyl-carrier protein], and carbon dioxide. In Phenylobacterium zucineum (strain HLK1), this protein is Putative 8-amino-7-oxononanoate synthase (bioF).